A 428-amino-acid chain; its full sequence is uncharacterized protein (428 aa).

The next 12 membrane-spanning stretches (helical) occupy residues 14–34 (LYDW…FPLF), 55–75 (YTIA…GTIA), 84–104 (FFGF…FIPS), 107–127 (WLLL…ANVF), 149–169 (FGLG…VILL), 182–202 (ASQL…IPMI), 238–258 (LFLF…IITM), 272–292 (SLLI…IIYG), 302–322 (TMLY…YFME), 324–344 (TLDF…IQAL), 361–381 (FFGF…LLIA), and 392–412 (TAVF…AFVP).

The protein belongs to the major facilitator superfamily.

The protein resides in the cell membrane. This is an uncharacterized protein from Bacillus subtilis (strain 168).